The following is a 318-amino-acid chain: Beta-ketoacyl-[acyl-carrier-protein] synthase III (318 aa).

Active-site residues include C112 and H245. The interval 246-250 (QANIR) is ACP-binding. N275 is a catalytic residue.

This sequence belongs to the thiolase-like superfamily. FabH family. In terms of assembly, homodimer.

It localises to the cytoplasm. It carries out the reaction malonyl-[ACP] + acetyl-CoA + H(+) = 3-oxobutanoyl-[ACP] + CO2 + CoA. Its pathway is lipid metabolism; fatty acid biosynthesis. In terms of biological role, catalyzes the condensation reaction of fatty acid synthesis by the addition to an acyl acceptor of two carbons from malonyl-ACP. Catalyzes the first condensation reaction which initiates fatty acid synthesis and may therefore play a role in governing the total rate of fatty acid production. Possesses both acetoacetyl-ACP synthase and acetyl transacylase activities. Its substrate specificity determines the biosynthesis of branched-chain and/or straight-chain of fatty acids. In Nitrosomonas europaea (strain ATCC 19718 / CIP 103999 / KCTC 2705 / NBRC 14298), this protein is Beta-ketoacyl-[acyl-carrier-protein] synthase III.